A 124-amino-acid polypeptide reads, in one-letter code: MHALGRHIIAELYGCDKEVLNNRELIEKIMVESALKAGAEVREVAFHKFSPQGVSGVVVISESHLTIHTWPELGYAAVDVFTCGERVDPWQACNYITEMLKASHMTTTEVKRGLFEQPVKVANL.

The active-site Schiff-base intermediate with substrate; via pyruvic acid is the Ser-63. Pyruvic acid (Ser); by autocatalysis is present on Ser-63. Residue His-68 is the Proton acceptor; for processing activity of the active site. Residue Cys-83 is the Proton donor; for catalytic activity of the active site.

The protein belongs to the prokaryotic AdoMetDC family. Type 1 subfamily. As to quaternary structure, heterotetramer of two alpha and two beta chains arranged as a dimer of alpha/beta heterodimers. Pyruvate serves as cofactor. Post-translationally, is synthesized initially as an inactive proenzyme. Formation of the active enzyme involves a self-maturation process in which the active site pyruvoyl group is generated from an internal serine residue via an autocatalytic post-translational modification. Two non-identical subunits are generated from the proenzyme in this reaction, and the pyruvate is formed at the N-terminus of the alpha chain, which is derived from the carboxyl end of the proenzyme. The post-translation cleavage follows an unusual pathway, termed non-hydrolytic serinolysis, in which the side chain hydroxyl group of the serine supplies its oxygen atom to form the C-terminus of the beta chain, while the remainder of the serine residue undergoes an oxidative deamination to produce ammonia and the pyruvoyl group blocking the N-terminus of the alpha chain.

The enzyme catalyses S-adenosyl-L-methionine + H(+) = S-adenosyl 3-(methylsulfanyl)propylamine + CO2. It functions in the pathway amine and polyamine biosynthesis; S-adenosylmethioninamine biosynthesis; S-adenosylmethioninamine from S-adenosyl-L-methionine: step 1/1. Catalyzes the decarboxylation of S-adenosylmethionine to S-adenosylmethioninamine (dcAdoMet), the propylamine donor required for the synthesis of the polyamines spermine and spermidine from the diamine putrescine. This chain is S-adenosylmethionine decarboxylase proenzyme, found in Caldicellulosiruptor bescii (strain ATCC BAA-1888 / DSM 6725 / KCTC 15123 / Z-1320) (Anaerocellum thermophilum).